A 690-amino-acid chain; its full sequence is Adhesion G protein-coupled receptor L4 (690 aa).

The signal sequence occupies residues 1 to 19 (MKRLPLLVVFSTLLNCSYT). One can recognise an EGF-like 1 domain in the interval 20-57 (QNCTKTPCLPNAKCEIRNGIEACYCNMGFSGNGVTICE). Over 20–432 (QNCTKTPCLP…DYNILTRITQ (413 aa)) the chain is Extracellular. Asn-21 carries an N-linked (GlcNAc...) asparagine glycan. 6 disulfide bridges follow: Cys-22–Cys-33, Cys-27–Cys-42, Cys-44–Cys-56, Cys-62–Cys-75, Cys-69–Cys-84, and Cys-86–Cys-107. The EGF-like 2; calcium-binding domain maps to 58–108 (DDNECGNLTQSCGENANCTNTEGSYYCMCVPGFRSSSNQDRFITNDGTVCI). N-linked (GlcNAc...) asparagine glycans are attached at residues Asn-64 and Asn-74. 6 N-linked (GlcNAc...) asparagine glycosylation sites follow: Asn-127, Asn-177, Asn-188, Asn-249, Asn-381, and Asn-395. The GAIN-B domain maps to 244–419 (TEFDTNSTDI…AILMSSGPSI (176 aa)). Disulfide bonds link Cys-370–Cys-401 and Cys-389–Cys-403. Residues 370 to 419 (CAFWNYSPDTMNGSWSSEGCELTYSNETHTSCRCNHLTHFAILMSSGPSI) are GPS. The chain crosses the membrane as a helical span at residues 433 to 453 (LGIIISLICLAICIFTFWFFS). At 454–460 (EIQSTRT) the chain is on the cytoplasmic side. The helical transmembrane segment at 461–481 (TIHKNLCCSLFLAELVFLVGI) threads the bilayer. Over 482–499 (NTNTNKLFCSIIAGLLHY) the chain is Extracellular. The helical transmembrane segment at 500–520 (FFLAAFAWMCIEGIHLYLIVV) threads the bilayer. At 521–532 (GVIYNKGFLHKN) the chain is on the cytoplasmic side. The helical transmembrane segment at 533–553 (FYIFGYLSPAVVVGFSAALGY) threads the bilayer. Residues 554–573 (RYYGTTKVCWLSTENNFIWS) lie on the Extracellular side of the membrane. A helical transmembrane segment spans residues 574 to 594 (FIGPACLIILVNLLAFGVIIY). Residues 595–618 (KVFRHTAGLKPEVSCFENIRSCAR) are Cytoplasmic-facing. The chain crosses the membrane as a helical span at residues 619–639 (GALALLFLLGTTWIFGVLHVV). The Extracellular segment spans residues 640 to 646 (HASVVTA). Residues 647 to 667 (YLFTVSNAFQGMFIFLFLCVL) traverse the membrane as a helical segment. The Cytoplasmic segment spans residues 668-690 (SRKIQEEYYRLFKNVPCCFGCLR).

The protein belongs to the G-protein coupled receptor 2 family. Adhesion G-protein coupled receptor (ADGR) subfamily. In terms of assembly, heterodimer of 2 chains generated by proteolytic processing; the large extracellular N-terminal fragment and the membrane-bound C-terminal fragment predominantly remain associated and non-covalently linked. Post-translationally, glycosylated. In terms of processing, proteolytically cleaved into 2 subunits, an extracellular alpha subunit and a seven-transmembrane subunit. As to expression, detected in the majority of epithelial cells in tumor and normal tissues. Expressed also in human umbilical vein endothelial cells.

Its subcellular location is the cell membrane. Functionally, endothelial orphan receptor that acts as a key regulator of angiogenesis. This chain is Adhesion G protein-coupled receptor L4, found in Homo sapiens (Human).